Consider the following 549-residue polypeptide: CTP synthase (549 aa).

The interval 1–267 (MAKFVFITGG…CREVLDVLNL (267 aa)) is amidoligase domain. S13 is a binding site for CTP. S13 serves as a coordination point for UTP. Residues 14–19 (SIGKGI) and D71 contribute to the ATP site. Mg(2+)-binding residues include D71 and E141. CTP contacts are provided by residues 148–150 (DIE), 188–193 (KTKPTQ), and K224. Residues 188 to 193 (KTKPTQ) and K224 each bind UTP. The region spanning 292-534 (KIALVGKYVQ…IEAAQQRLPD (243 aa)) is the Glutamine amidotransferase type-1 domain. G354 serves as a coordination point for L-glutamine. The active-site Nucleophile; for glutamine hydrolysis is the C381. L-glutamine contacts are provided by residues 382–385 (LGMQ), E405, and R462. Active-site residues include H507 and E509.

It belongs to the CTP synthase family. In terms of assembly, homotetramer.

The enzyme catalyses UTP + L-glutamine + ATP + H2O = CTP + L-glutamate + ADP + phosphate + 2 H(+). It catalyses the reaction L-glutamine + H2O = L-glutamate + NH4(+). It carries out the reaction UTP + NH4(+) + ATP = CTP + ADP + phosphate + 2 H(+). The protein operates within pyrimidine metabolism; CTP biosynthesis via de novo pathway; CTP from UDP: step 2/2. Its activity is regulated as follows. Allosterically activated by GTP, when glutamine is the substrate; GTP has no effect on the reaction when ammonia is the substrate. The allosteric effector GTP functions by stabilizing the protein conformation that binds the tetrahedral intermediate(s) formed during glutamine hydrolysis. Inhibited by the product CTP, via allosteric rather than competitive inhibition. Catalyzes the ATP-dependent amination of UTP to CTP with either L-glutamine or ammonia as the source of nitrogen. Regulates intracellular CTP levels through interactions with the four ribonucleotide triphosphates. This Synechococcus sp. (strain CC9605) protein is CTP synthase.